Reading from the N-terminus, the 220-residue chain is Putative NAD(P)H nitroreductase (220 aa).

155–160 is a binding site for NAD(+); it reads GASALG.

This sequence belongs to the nitroreductase family. It depends on FMN as a cofactor.

The sequence is that of Putative NAD(P)H nitroreductase from Haemophilus influenzae (strain ATCC 51907 / DSM 11121 / KW20 / Rd).